A 733-amino-acid chain; its full sequence is Acyl-coenzyme A oxidase (733 aa).

The protein belongs to the acyl-CoA oxidase family. Requires FAD as cofactor.

It is found in the peroxisome. It carries out the reaction a 2,3-saturated acyl-CoA + O2 = a (2E)-enoyl-CoA + H2O2. Its pathway is lipid metabolism; peroxisomal fatty acid beta-oxidation. The protein is Acyl-coenzyme A oxidase (POX1) of Eremothecium gossypii (strain ATCC 10895 / CBS 109.51 / FGSC 9923 / NRRL Y-1056) (Yeast).